A 208-amino-acid polypeptide reads, in one-letter code: Riboflavin synthase (208 aa).

Lumazine-binding repeat units lie at residues 1–97 (MFTG…MGGH) and 98–195 (IISG…VDTT). 2,4-dihydroxypteridine-binding positions include 4-6 (GIV), 48-50 (CLT), 62-67 (DIMKIT), 101-103 (GHI), lysine 137, 146-148 (SLT), and 160-165 (SIIPET).

As to quaternary structure, homotrimer.

It catalyses the reaction 2 6,7-dimethyl-8-(1-D-ribityl)lumazine + H(+) = 5-amino-6-(D-ribitylamino)uracil + riboflavin. It functions in the pathway cofactor biosynthesis; riboflavin biosynthesis; riboflavin from 2-hydroxy-3-oxobutyl phosphate and 5-amino-6-(D-ribitylamino)uracil: step 2/2. In terms of biological role, catalyzes the dismutation of two molecules of 6,7-dimethyl-8-ribityllumazine, resulting in the formation of riboflavin and 5-amino-6-(D-ribitylamino)uracil. This is Riboflavin synthase (ribE) from Buchnera aphidicola subsp. Schizaphis graminum (strain Sg).